We begin with the raw amino-acid sequence, 122 residues long: Large ribosomal subunit protein uL18 (122 aa).

Belongs to the universal ribosomal protein uL18 family. In terms of assembly, part of the 50S ribosomal subunit; part of the 5S rRNA/L5/L18/L25 subcomplex. Contacts the 5S and 23S rRNAs.

Functionally, this is one of the proteins that bind and probably mediate the attachment of the 5S RNA into the large ribosomal subunit, where it forms part of the central protuberance. The polypeptide is Large ribosomal subunit protein uL18 (Leptospira interrogans serogroup Icterohaemorrhagiae serovar copenhageni (strain Fiocruz L1-130)).